A 324-amino-acid polypeptide reads, in one-letter code: Beta-ketoacyl-[acyl-carrier-protein] synthase III (324 aa).

Active-site residues include C112 and H249. Residues 250-254 are ACP-binding; it reads QANRR. Residue N279 is part of the active site.

The protein belongs to the thiolase-like superfamily. FabH family. As to quaternary structure, homodimer.

It localises to the cytoplasm. It catalyses the reaction malonyl-[ACP] + acetyl-CoA + H(+) = 3-oxobutanoyl-[ACP] + CO2 + CoA. It participates in lipid metabolism; fatty acid biosynthesis. Catalyzes the condensation reaction of fatty acid synthesis by the addition to an acyl acceptor of two carbons from malonyl-ACP. Catalyzes the first condensation reaction which initiates fatty acid synthesis and may therefore play a role in governing the total rate of fatty acid production. Possesses both acetoacetyl-ACP synthase and acetyl transacylase activities. Its substrate specificity determines the biosynthesis of branched-chain and/or straight-chain of fatty acids. In Streptococcus pyogenes serotype M1, this protein is Beta-ketoacyl-[acyl-carrier-protein] synthase III.